We begin with the raw amino-acid sequence, 261 residues long: Cytochrome c oxidase subunit 3 (261 aa).

Over 1–15 (MTHQTHAYHMVNPSP) the chain is Mitochondrial matrix. A helical membrane pass occupies residues 16-34 (WPLTGALSALLMTSGLIMW). The Mitochondrial intermembrane segment spans residues 35 to 40 (FHFNSV). A helical membrane pass occupies residues 41 to 66 (ALLTLGLTTNMLTMYQWWRDVIREST). The Mitochondrial matrix portion of the chain corresponds to 67–72 (FQGHHT). Residues 73–105 (PNVQKGLRYGMILFIISEVLFFTGFFWAFYHSS) form a helical membrane-spanning segment. At 106–128 (LAPTPELGGCWPPTGIHPLNPLE) the chain is on the mitochondrial intermembrane side. A helical membrane pass occupies residues 129-152 (VPLLNTSVLLASGVSITWAHHSLM). The Mitochondrial matrix segment spans residues 153–155 (EGN). The helical transmembrane segment at 156-183 (RNHMLQALFITIALGVYFTLLQASEYYE) threads the bilayer. Over 184-190 (APFTISD) the chain is Mitochondrial intermembrane. Residues 191–223 (GVYGSTFFVATGFHGLHVIIGSTFLIVCFFRQL) traverse the membrane as a helical segment. The Mitochondrial matrix segment spans residues 224 to 232 (KFHFTSSHH). A helical membrane pass occupies residues 233–256 (FGFEAAAWYWHFVDVVWLFLYVSI). The Mitochondrial intermembrane segment spans residues 257 to 261 (YWWGS).

It belongs to the cytochrome c oxidase subunit 3 family. Component of the cytochrome c oxidase (complex IV, CIV), a multisubunit enzyme composed of 14 subunits. The complex is composed of a catalytic core of 3 subunits MT-CO1, MT-CO2 and MT-CO3, encoded in the mitochondrial DNA, and 11 supernumerary subunits COX4I, COX5A, COX5B, COX6A, COX6B, COX6C, COX7A, COX7B, COX7C, COX8 and NDUFA4, which are encoded in the nuclear genome. The complex exists as a monomer or a dimer and forms supercomplexes (SCs) in the inner mitochondrial membrane with NADH-ubiquinone oxidoreductase (complex I, CI) and ubiquinol-cytochrome c oxidoreductase (cytochrome b-c1 complex, complex III, CIII), resulting in different assemblies (supercomplex SCI(1)III(2)IV(1) and megacomplex MCI(2)III(2)IV(2)).

It localises to the mitochondrion inner membrane. The enzyme catalyses 4 Fe(II)-[cytochrome c] + O2 + 8 H(+)(in) = 4 Fe(III)-[cytochrome c] + 2 H2O + 4 H(+)(out). Its function is as follows. Component of the cytochrome c oxidase, the last enzyme in the mitochondrial electron transport chain which drives oxidative phosphorylation. The respiratory chain contains 3 multisubunit complexes succinate dehydrogenase (complex II, CII), ubiquinol-cytochrome c oxidoreductase (cytochrome b-c1 complex, complex III, CIII) and cytochrome c oxidase (complex IV, CIV), that cooperate to transfer electrons derived from NADH and succinate to molecular oxygen, creating an electrochemical gradient over the inner membrane that drives transmembrane transport and the ATP synthase. Cytochrome c oxidase is the component of the respiratory chain that catalyzes the reduction of oxygen to water. Electrons originating from reduced cytochrome c in the intermembrane space (IMS) are transferred via the dinuclear copper A center (CU(A)) of subunit 2 and heme A of subunit 1 to the active site in subunit 1, a binuclear center (BNC) formed by heme A3 and copper B (CU(B)). The BNC reduces molecular oxygen to 2 water molecules using 4 electrons from cytochrome c in the IMS and 4 protons from the mitochondrial matrix. The polypeptide is Cytochrome c oxidase subunit 3 (MT-CO3) (Nanger dama (Dama gazelle)).